The chain runs to 417 residues: Serine--tRNA ligase (417 aa).

Thr-225–Glu-227 is an L-serine binding site. Arg-256–Glu-258 contacts ATP. Position 279 (Glu-279) interacts with L-serine. An ATP-binding site is contributed by Glu-343–Ser-346. Residue Thr-379 participates in L-serine binding.

This sequence belongs to the class-II aminoacyl-tRNA synthetase family. Type-1 seryl-tRNA synthetase subfamily. Homodimer. The tRNA molecule binds across the dimer.

It is found in the cytoplasm. It catalyses the reaction tRNA(Ser) + L-serine + ATP = L-seryl-tRNA(Ser) + AMP + diphosphate + H(+). It carries out the reaction tRNA(Sec) + L-serine + ATP = L-seryl-tRNA(Sec) + AMP + diphosphate + H(+). The protein operates within aminoacyl-tRNA biosynthesis; selenocysteinyl-tRNA(Sec) biosynthesis; L-seryl-tRNA(Sec) from L-serine and tRNA(Sec): step 1/1. Catalyzes the attachment of serine to tRNA(Ser). Is also able to aminoacylate tRNA(Sec) with serine, to form the misacylated tRNA L-seryl-tRNA(Sec), which will be further converted into selenocysteinyl-tRNA(Sec). The protein is Serine--tRNA ligase of Mycoplasma genitalium (strain ATCC 33530 / DSM 19775 / NCTC 10195 / G37) (Mycoplasmoides genitalium).